Here is a 238-residue protein sequence, read N- to C-terminus: Ribosomal RNA small subunit methyltransferase G (238 aa).

S-adenosyl-L-methionine is bound by residues G77, F82, 128 to 129 (AE), and R147.

It belongs to the methyltransferase superfamily. RNA methyltransferase RsmG family.

The protein localises to the cytoplasm. Specifically methylates the N7 position of guanine in position 535 of 16S rRNA. The polypeptide is Ribosomal RNA small subunit methyltransferase G (Geobacillus kaustophilus (strain HTA426)).